Here is a 697-residue protein sequence, read N- to C-terminus: Elongation factor G (697 aa).

The tr-type G domain maps to 8–290 (ERYRNIGIMA…AVLSYMPSPV (283 aa)). Residues 17–24 (AHIDAGKT), 88–92 (DTPGH), and 142–145 (NKMD) each bind GTP.

This sequence belongs to the TRAFAC class translation factor GTPase superfamily. Classic translation factor GTPase family. EF-G/EF-2 subfamily.

It localises to the cytoplasm. Catalyzes the GTP-dependent ribosomal translocation step during translation elongation. During this step, the ribosome changes from the pre-translocational (PRE) to the post-translocational (POST) state as the newly formed A-site-bound peptidyl-tRNA and P-site-bound deacylated tRNA move to the P and E sites, respectively. Catalyzes the coordinated movement of the two tRNA molecules, the mRNA and conformational changes in the ribosome. In Nitrosococcus oceani (strain ATCC 19707 / BCRC 17464 / JCM 30415 / NCIMB 11848 / C-107), this protein is Elongation factor G.